The chain runs to 94 residues: Integration host factor subunit beta (94 aa).

This sequence belongs to the bacterial histone-like protein family. In terms of assembly, heterodimer of an alpha and a beta chain.

Its function is as follows. This protein is one of the two subunits of integration host factor, a specific DNA-binding protein that functions in genetic recombination as well as in transcriptional and translational control. The polypeptide is Integration host factor subunit beta (Azorhizobium caulinodans (strain ATCC 43989 / DSM 5975 / JCM 20966 / LMG 6465 / NBRC 14845 / NCIMB 13405 / ORS 571)).